The primary structure comprises 363 residues: MFTRTIRQQIRRSSALSLVRNNWTREEIQKIYDTPLIDLIFRAASIHRKFHDPKKVQQCTLLSIKTGGCTEDCKYCAQSSRYNTGVKATKLMKIDEVLEKAKIAKAKGSTRFCMGSAWRDLNGRNRTFKNILEIIKEVRSMDMEVCVTLGMLNEQQAKELKDAGLTAYNHNLDTSREYYSKIISTRTYDERLNTIDNLRKAGLKVCSGGILGLGEKKHDRVGLIHSLATMPTHPESVPFNLLVPIPGTPVGDAVKERLPIHPFLRSIATARICMPKTIIRFAAGRNTCSESEQALAFMAGANAVFTGEKMLTTPAVSWDSDSQLFYNWGLEGMQSFEYGTSTEGEDGTFTLPPKERLAPSPSL.

Phosphoserine occurs at positions 13, 14, and 17. The region spanning 54–276 (KKVQQCTLLS…IATARICMPK (223 aa)) is the Radical SAM core domain. [4Fe-4S] cluster-binding residues include cysteine 69, cysteine 73, and cysteine 76. 4 residues coordinate [2Fe-2S] cluster: cysteine 113, cysteine 146, cysteine 206, and arginine 280. Residues 337 to 363 (EYGTSTEGEDGTFTLPPKERLAPSPSL) are disordered.

It belongs to the radical SAM superfamily. Biotin synthase family. Requires [4Fe-4S] cluster as cofactor. It depends on [2Fe-2S] cluster as a cofactor.

It catalyses the reaction (4R,5S)-dethiobiotin + (sulfur carrier)-SH + 2 reduced [2Fe-2S]-[ferredoxin] + 2 S-adenosyl-L-methionine = (sulfur carrier)-H + biotin + 2 5'-deoxyadenosine + 2 L-methionine + 2 oxidized [2Fe-2S]-[ferredoxin]. It participates in cofactor biosynthesis; biotin biosynthesis; biotin from 7,8-diaminononanoate: step 2/2. Catalyzes the last step of biotin biosynthesis, the conversion of dethiobiotin to biotin. The sequence is that of Biotin synthase (bio2) from Schizosaccharomyces pombe (strain 972 / ATCC 24843) (Fission yeast).